The following is a 247-amino-acid chain: uncharacterized protein (247 aa).

The signal sequence occupies residues 1–35 (MWGPGVTAEGLSVAPAPPPLLPLLLLLALALVAPS). Residues 82-102 (LSGLLILLVLFAIGYFLQRII) traverse the membrane as a helical segment. The segment at 109–176 (YPRGQARPGQ…RGSGGRLPPS (68 aa)) is disordered. The segment covering 111–120 (RGQARPGQAR) has biased composition (low complexity). Positions 161 to 171 (SGGGRGRGSGG) are enriched in gly residues.

It is found in the membrane. This is an uncharacterized protein from Mus musculus (Mouse).